Here is an 810-residue protein sequence, read N- to C-terminus: AMP deaminase (810 aa).

The segment covering 1–10 has biased composition (polar residues); sequence MDNQATQRLN. Disordered stretches follow at residues 1 to 61 and 114 to 137; these read MDNQ…SHES and AAMNKGHDSADHASQNSGGKPRTL. Residues Ser-19, Ser-58, and Ser-61 each carry the phosphoserine modification. Residues 125-137 show a composition bias toward polar residues; that stretch reads HASQNSGGKPRTL. Ser-138 is modified (phosphoserine). Zn(2+)-binding residues include His-362 and His-364. Substrate is bound by residues His-364 and 433 to 438; that span reads KFNLKY. His-630 serves as a coordination point for Zn(2+). Substrate is bound at residue Glu-633. The Proton acceptor role is filled by His-652. Asp-707 is a binding site for Zn(2+). 708–711 is a binding site for substrate; sequence DPLQ.

Belongs to the metallo-dependent hydrolases superfamily. Adenosine and AMP deaminases family. As to quaternary structure, homotetramer. It depends on Zn(2+) as a cofactor.

It carries out the reaction AMP + H2O + H(+) = IMP + NH4(+). It participates in purine metabolism; IMP biosynthesis via salvage pathway; IMP from AMP: step 1/1. Its function is as follows. AMP deaminase plays a critical role in energy metabolism. The chain is AMP deaminase (AMD1) from Saccharomyces cerevisiae (strain ATCC 204508 / S288c) (Baker's yeast).